Consider the following 172-residue polypeptide: RNA silencing suppressor p19 (172 aa).

A disordered region spans residues 153 to 172 (EGNVSGGSPEGIEAFEKESE).

It belongs to the tombusvirus protein p19 family. As to quaternary structure, homodimer.

Functionally, viral suppressor of RNA silencing which binds specifically to silencing RNAs (siRNAs). Acts as a molecular caliper to specifically select siRNAs based on the length of the duplex region of the RNA. The polypeptide is RNA silencing suppressor p19 (Pelargonium zonale (PeNSV)).